Here is a 356-residue protein sequence, read N- to C-terminus: GDP-mannose 4,6 dehydratase (356 aa).

NADP(+) contacts are provided by residues 12–17 (GITGQD), 69–70 (DL), 91–95 (LGAQS), and tyrosine 106. Threonine 138 is a catalytic residue. Active-site nucleophile residues include glutamate 140 and tyrosine 162. 3 residues coordinate NADP(+): lysine 166, histidine 192, and arginine 197.

This sequence belongs to the NAD(P)-dependent epimerase/dehydratase family. GDP-mannose 4,6-dehydratase subfamily. It depends on NADP(+) as a cofactor.

It carries out the reaction GDP-alpha-D-mannose = GDP-4-dehydro-alpha-D-rhamnose + H2O. It functions in the pathway nucleotide-sugar biosynthesis; GDP-L-fucose biosynthesis via de novo pathway; GDP-L-fucose from GDP-alpha-D-mannose: step 1/2. In terms of biological role, participates in the synthesis of GDP-L-fucose, catalyzing the conversion of GDP-D-mannose to GDP-4-dehydro-6-deoxy-D-mannose (GDP-4-dehydro-alpha-D-rhamnose) which is further catalyzed by GDP-L-fucose synthase (ger). GDP-L-fucose is important for the synthesis of fucosylated N-glycans which are expressed on the cell surface. In Dictyostelium discoideum (Social amoeba), this protein is GDP-mannose 4,6 dehydratase (gmd).